A 55-amino-acid polypeptide reads, in one-letter code: ATP synthase protein 8 (55 aa).

Residues Leu4–Ile24 form a helical membrane-spanning segment.

The protein belongs to the ATPase protein 8 family. F-type ATPases have 2 components, CF(1) - the catalytic core - and CF(0) - the membrane proton channel.

The protein localises to the mitochondrion membrane. Functionally, mitochondrial membrane ATP synthase (F(1)F(0) ATP synthase or Complex V) produces ATP from ADP in the presence of a proton gradient across the membrane which is generated by electron transport complexes of the respiratory chain. F-type ATPases consist of two structural domains, F(1) - containing the extramembraneous catalytic core and F(0) - containing the membrane proton channel, linked together by a central stalk and a peripheral stalk. During catalysis, ATP synthesis in the catalytic domain of F(1) is coupled via a rotary mechanism of the central stalk subunits to proton translocation. Part of the complex F(0) domain. Minor subunit located with subunit a in the membrane. The polypeptide is ATP synthase protein 8 (MT-ATP8) (Petromyzon marinus (Sea lamprey)).